A 215-amino-acid chain; its full sequence is Adenylate kinase (215 aa).

Residue 10-15 coordinates ATP; that stretch reads GAGKGT. The interval 30 to 59 is NMP; that stretch reads STGDILRANVREGTELGLAAKAYMDKGELV. AMP contacts are provided by residues Thr-31, Arg-36, 57 to 59, 85 to 88, and Gln-92; these read ELV and GYPR. The tract at residues 126–162 is LID; sequence GRLMCKCGASYHTIANPPKKDNICDICGGEVYQRDDD. Arg-127 is an ATP binding site. Cys-130 and Cys-132 together coordinate Zn(2+). 135–136 provides a ligand contact to ATP; sequence SY. Positions 149 and 152 each coordinate Zn(2+). Residues Arg-159 and Arg-170 each contribute to the AMP site. ATP is bound at residue Lys-198.

The protein belongs to the adenylate kinase family. As to quaternary structure, monomer.

The protein resides in the cytoplasm. The enzyme catalyses AMP + ATP = 2 ADP. It functions in the pathway purine metabolism; AMP biosynthesis via salvage pathway; AMP from ADP: step 1/1. In terms of biological role, catalyzes the reversible transfer of the terminal phosphate group between ATP and AMP. Plays an important role in cellular energy homeostasis and in adenine nucleotide metabolism. This Methanosarcina mazei (strain ATCC BAA-159 / DSM 3647 / Goe1 / Go1 / JCM 11833 / OCM 88) (Methanosarcina frisia) protein is Adenylate kinase.